Reading from the N-terminus, the 156-residue chain is 1-methylthio-D-xylulose 5-phosphate methylsulfurylase (156 aa).

In terms of domain architecture, Cupin type-2 spans 55–122; that stretch reads YFEVGPGGHS…ADEALGFLCM (68 aa). Glutamate 67, histidine 69, histidine 73, and histidine 107 together coordinate Mn(2+). Cysteine 121 is a catalytic residue.

The catalysed reaction is S-methyl-1-thio-D-xylulose 5-phosphate + glutathione = S-(methylsulfanyl)glutathione + 1-deoxy-D-xylulose 5-phosphate. The enzyme catalyses S-(methylsulfanyl)glutathione + AH2 = methanethiol + glutathione + A. Its pathway is amino-acid biosynthesis; L-methionine biosynthesis via salvage pathway. It functions in the pathway metabolic intermediate biosynthesis; 1-deoxy-D-xylulose 5-phosphate biosynthesis. In terms of biological role, catalyzes the formation of S-(methylsulfanyl)glutathione and 1-deoxy-D-xylulose 5-phosphate (DXP) from 1-methylthioxylulose 5-phosphate (MTXu-5P). The S-(methylsulfanyl)glutathione is reductively cleaved to relase methanethiol in a second reaction. Involved in the MTA-isoprenoid shunt of the methionine salvage pathway. This is 1-methylthio-D-xylulose 5-phosphate methylsulfurylase from Rhodospirillum rubrum (strain ATCC 11170 / ATH 1.1.1 / DSM 467 / LMG 4362 / NCIMB 8255 / S1).